The chain runs to 678 residues: Vacuolar protein sorting-associated protein 1 (678 aa).

Positions Leu-24 to Pro-311 constitute a Dynamin-type G domain. Residues Arg-34–Ser-41 are G1 motif. Arg-34 to Ser-41 contributes to the GTP binding site. Positions Val-60–Arg-62 are G2 motif. Residues Asn-71–Glu-96 are disordered. Residues Lys-78 to Asp-90 show a composition bias toward basic and acidic residues. Residues Asp-153–Gly-156 form a G3 motif region. Residues Asp-153 to Leu-157 and Thr-222 to Asp-225 each bind GTP. The tract at residues Thr-222–Asp-225 is G4 motif. Residues Ile-252 to Gly-255 are G5 motif. The 87-residue stretch at Thr-592–Val-678 folds into the GED domain.

Belongs to the TRAFAC class dynamin-like GTPase superfamily. Dynamin/Fzo/YdjA family.

The protein is Vacuolar protein sorting-associated protein 1 (vps1) of Schizosaccharomyces pombe (strain 972 / ATCC 24843) (Fission yeast).